A 304-amino-acid chain; its full sequence is MLLSTHLLFVITTLVTSLLHPIDGHAVKRSGSLQQVTDFGDNPTNVGMYIYVPNNLASNPGIVVAIHYCTGTGPGYYGDSPYATLSEQYGFIVIYPSSPYSGGCWDVSSQATLTHNGGGNSNSIANMVTWTISKYGADSSKVFVTGSSSGAMMTNVMAATYPELFAAATVYSGVSAGCFYSNTNQVDGWNSTCAQGDVITTPEHWASIAEAMYSGYSGSRPRMQIYHGSIDTTLYPQNYYETCKQWAGVFGYDYSAPEKTEANTPQTNYETTIWGDSLQGIFATGVGHTVPIHGDKDMEWFGFA.

The signal sequence occupies residues 1–24 (MLLSTHLLFVITTLVTSLLHPIDG). Ser148 serves as the catalytic Charge relay system. Asn190 carries N-linked (GlcNAc...) asparagine glycosylation.

It belongs to the carbohydrate esterase 1 (CE1) family. AxeA subfamily. As to quaternary structure, monomer.

The protein localises to the secreted. The catalysed reaction is Deacetylation of xylans and xylo-oligosaccharides.. It participates in glycan degradation; xylan degradation. With respect to regulation, inactivated by di-isopropylfluorophosphate and phenylmethylsulfonylfluorid (PMSF), a specific inhibitor of serine esterases. Functionally, acetylxylan esterase involved in the hydrolysis of xylan, a major structural heterogeneous polysaccharide found in plant biomass representing the second most abundant polysaccharide in the biosphere, after cellulose. Degrades acetylated xylans by cleaving acetyl side groups from the hetero-xylan backbone. The protein is Acetylxylan esterase A (axeA) of Aspergillus awamori (Black koji mold).